A 201-amino-acid chain; its full sequence is MRRIVLASNNPGKLAEFNALLAPLGLDVAPQGELGIPEAEEPHATFVENALAKARHASRLAGLPALADDSGICAHALGGAPGVYSARYAQLAGGPKSDAANNARLVRELAGHADRGAHYVCVLVYVRHADDPQPIIAEGSWFGEVIDAPRGDGGFGYDPHFLLPALGKTAAELSKAEKNAVSHRAQALAQLVERLRLFENA.

8-13 (SNNPGK) lines the substrate pocket. The Mg(2+) site is built by glutamate 40 and aspartate 69. The active-site Proton acceptor is aspartate 69. Residues serine 70, 155-158 (FGYD), lysine 178, and 183-184 (HR) each bind substrate.

It belongs to the HAM1 NTPase family. In terms of assembly, homodimer. The cofactor is Mg(2+).

It carries out the reaction XTP + H2O = XMP + diphosphate + H(+). The enzyme catalyses dITP + H2O = dIMP + diphosphate + H(+). It catalyses the reaction ITP + H2O = IMP + diphosphate + H(+). Functionally, pyrophosphatase that catalyzes the hydrolysis of nucleoside triphosphates to their monophosphate derivatives, with a high preference for the non-canonical purine nucleotides XTP (xanthosine triphosphate), dITP (deoxyinosine triphosphate) and ITP. Seems to function as a house-cleaning enzyme that removes non-canonical purine nucleotides from the nucleotide pool, thus preventing their incorporation into DNA/RNA and avoiding chromosomal lesions. This is dITP/XTP pyrophosphatase from Ralstonia nicotianae (strain ATCC BAA-1114 / GMI1000) (Ralstonia solanacearum).